Consider the following 166-residue polypeptide: NAD(P)H-quinone oxidoreductase subunit I, chloroplastic (166 aa).

4Fe-4S ferredoxin-type domains lie at 55–84 and 95–124; these read GRIHFEFDKCIACEVCVRVCPIDLPVVDWK and LNYSIDFGICIFCGNCVEYCPTNCLSMTEE. [4Fe-4S] cluster-binding residues include cysteine 64, cysteine 67, cysteine 70, cysteine 74, cysteine 104, cysteine 107, cysteine 110, and cysteine 114.

This sequence belongs to the complex I 23 kDa subunit family. As to quaternary structure, NDH is composed of at least 16 different subunits, 5 of which are encoded in the nucleus. [4Fe-4S] cluster is required as a cofactor.

It localises to the plastid. The protein resides in the chloroplast thylakoid membrane. The enzyme catalyses a plastoquinone + NADH + (n+1) H(+)(in) = a plastoquinol + NAD(+) + n H(+)(out). It catalyses the reaction a plastoquinone + NADPH + (n+1) H(+)(in) = a plastoquinol + NADP(+) + n H(+)(out). Its function is as follows. NDH shuttles electrons from NAD(P)H:plastoquinone, via FMN and iron-sulfur (Fe-S) centers, to quinones in the photosynthetic chain and possibly in a chloroplast respiratory chain. The immediate electron acceptor for the enzyme in this species is believed to be plastoquinone. Couples the redox reaction to proton translocation, and thus conserves the redox energy in a proton gradient. In Ambrosia trifida (Giant ragweed), this protein is NAD(P)H-quinone oxidoreductase subunit I, chloroplastic.